The following is a 264-amino-acid chain: 3-methyl-2-oxobutanoate hydroxymethyltransferase (264 aa).

Mg(2+) contacts are provided by Asp45 and Asp84. 3-methyl-2-oxobutanoate contacts are provided by residues 45–46 (DS), Asp84, and Lys112. Position 114 (Glu114) interacts with Mg(2+). The active-site Proton acceptor is the Glu181.

The protein belongs to the PanB family. In terms of assembly, homodecamer; pentamer of dimers. Mg(2+) serves as cofactor.

It localises to the cytoplasm. The enzyme catalyses 3-methyl-2-oxobutanoate + (6R)-5,10-methylene-5,6,7,8-tetrahydrofolate + H2O = 2-dehydropantoate + (6S)-5,6,7,8-tetrahydrofolate. It functions in the pathway cofactor biosynthesis; (R)-pantothenate biosynthesis; (R)-pantoate from 3-methyl-2-oxobutanoate: step 1/2. In terms of biological role, catalyzes the reversible reaction in which hydroxymethyl group from 5,10-methylenetetrahydrofolate is transferred onto alpha-ketoisovalerate to form ketopantoate. The polypeptide is 3-methyl-2-oxobutanoate hydroxymethyltransferase (Escherichia coli O127:H6 (strain E2348/69 / EPEC)).